The primary structure comprises 160 residues: uncharacterized protein (160 aa).

Residues 137–157 form a helical membrane-spanning segment; sequence YNILFVVVILLLLFVAWRCYV.

It is found in the host membrane. The protein resides in the virion. This is an uncharacterized protein from Acanthamoeba polyphaga mimivirus (APMV).